The primary structure comprises 217 residues: Trimethylamine corrinoid protein 2 (217 aa).

Positions 1–92 (MAGKEEIIAK…EMEKRKAKTT (92 aa)) constitute a B12-binding N-terminal domain. The region spanning 94 to 217 (LGTVIIGTIE…VNKIKAAIKS (124 aa)) is the B12-binding domain. Residue His107 participates in methylcob(III)alamin binding.

It belongs to the methylamine corrinoid protein family. Can form a complex with MttB.

It functions in the pathway one-carbon metabolism; methanogenesis from trimethylamine. Functionally, acts probably as a methyl group carrier between MttB and either MtbA or MtaA. This chain is Trimethylamine corrinoid protein 2 (mttC2), found in Methanosarcina acetivorans (strain ATCC 35395 / DSM 2834 / JCM 12185 / C2A).